The sequence spans 306 residues: Serine/threonine-protein kinase KIN28 (306 aa).

Residues 7-290 (YTKEKKVGEG…AVQCLESDYF (284 aa)) form the Protein kinase domain. ATP is bound by residues 13 to 21 (VGEGTYAVV) and K36. The Proton acceptor role is filled by D129. T162 bears the Phosphothreonine; by CAK mark.

The protein belongs to the protein kinase superfamily. CMGC Ser/Thr protein kinase family. CDC2/CDKX subfamily. In terms of assembly, CCL1 and KIN28 form the TFIIK complex, a component of the TFIIH holo complex. Component of a complex consisting of KIN28, CCL1 and TFB3. Interacts with TFB3. Also interacts with HNT1 and HOG1. Post-translationally, phosphorylation of Thr-162 regulates the affinity of interaction between CCL1, KIN28 and TFB3. Thr-162 phosphorylation does not vary through the cell cycle and is necessary for full kinase activity.

It localises to the nucleus. It catalyses the reaction [DNA-directed RNA polymerase] + ATP = phospho-[DNA-directed RNA polymerase] + ADP + H(+). In terms of biological role, catalytic component of the TFIIK complex (KIN28-CCL1 dimer) which is the protein kinase component of transcription factor IIH (TFIIH) and phosphorylates the C-terminal domain of RNA polymerase II during transition from transcription to elongation after preinitiation complex (PIC) formation, thereby positively regulating transcription. TFIIH (or factor B) is essential for both basal and activated transcription, and is involved in nucleotide excision repair (NER) of damaged DNA. TFIIH has DNA-dependent ATPase activity and is essential for polymerase II transcription in vitro. Essential for cell proliferation. This Saccharomyces cerevisiae (strain ATCC 204508 / S288c) (Baker's yeast) protein is Serine/threonine-protein kinase KIN28 (KIN28).